The chain runs to 555 residues: CTP synthase (555 aa).

The segment at 1–271 is amidoligase domain; the sequence is MVKRGKKTKY…DDKLAELFNI (271 aa). Serine 19 provides a ligand contact to CTP. Serine 19 contributes to the UTP binding site. Residues 20–25 and aspartate 77 each bind ATP; that span reads SLGKGL. The Mg(2+) site is built by aspartate 77 and glutamate 145. Residues 152–154, 192–197, and lysine 228 contribute to the CTP site; these read DIE and KTKPTQ. Residues 192–197 and lysine 228 contribute to the UTP site; that span reads KTKPTQ. In terms of domain architecture, Glutamine amidotransferase type-1 spans 297–537; it reads RIGIVGKYVE…VKAALEHRDA (241 aa). Glycine 358 serves as a coordination point for L-glutamine. Catalysis depends on cysteine 385, which acts as the Nucleophile; for glutamine hydrolysis. Residues 386 to 389, glutamate 409, and arginine 466 contribute to the L-glutamine site; that span reads LGLQ. Active-site residues include histidine 510 and glutamate 512. Residues 536–555 are disordered; sequence DAQQRQPSAEVKKLPVGKNG.

This sequence belongs to the CTP synthase family. Homotetramer.

The catalysed reaction is UTP + L-glutamine + ATP + H2O = CTP + L-glutamate + ADP + phosphate + 2 H(+). It catalyses the reaction L-glutamine + H2O = L-glutamate + NH4(+). It carries out the reaction UTP + NH4(+) + ATP = CTP + ADP + phosphate + 2 H(+). It participates in pyrimidine metabolism; CTP biosynthesis via de novo pathway; CTP from UDP: step 2/2. Its activity is regulated as follows. Allosterically activated by GTP, when glutamine is the substrate; GTP has no effect on the reaction when ammonia is the substrate. The allosteric effector GTP functions by stabilizing the protein conformation that binds the tetrahedral intermediate(s) formed during glutamine hydrolysis. Inhibited by the product CTP, via allosteric rather than competitive inhibition. In terms of biological role, catalyzes the ATP-dependent amination of UTP to CTP with either L-glutamine or ammonia as the source of nitrogen. Regulates intracellular CTP levels through interactions with the four ribonucleotide triphosphates. This is CTP synthase from Anaeromyxobacter dehalogenans (strain 2CP-C).